Reading from the N-terminus, the 263-residue chain is Thiazole synthase (263 aa).

Lysine 100 (schiff-base intermediate with DXP) is an active-site residue. Residues glycine 161, 188-189 (AG), and 210-211 (NS) each bind 1-deoxy-D-xylulose 5-phosphate.

This sequence belongs to the ThiG family. Homotetramer. Forms heterodimers with either ThiH or ThiS.

The protein localises to the cytoplasm. It catalyses the reaction [ThiS sulfur-carrier protein]-C-terminal-Gly-aminoethanethioate + 2-iminoacetate + 1-deoxy-D-xylulose 5-phosphate = [ThiS sulfur-carrier protein]-C-terminal Gly-Gly + 2-[(2R,5Z)-2-carboxy-4-methylthiazol-5(2H)-ylidene]ethyl phosphate + 2 H2O + H(+). It functions in the pathway cofactor biosynthesis; thiamine diphosphate biosynthesis. In terms of biological role, catalyzes the rearrangement of 1-deoxy-D-xylulose 5-phosphate (DXP) to produce the thiazole phosphate moiety of thiamine. Sulfur is provided by the thiocarboxylate moiety of the carrier protein ThiS. In vitro, sulfur can be provided by H(2)S. In Pseudoalteromonas translucida (strain TAC 125), this protein is Thiazole synthase.